Here is a 324-residue protein sequence, read N- to C-terminus: Protein ChrB (324 aa).

In terms of biological role, together with ChrA1, this protein reduces chromate accumulation and is essential for chromate resistance, possibly as a regulatory protein. This is Protein ChrB from Cupriavidus metallidurans (strain ATCC 43123 / DSM 2839 / NBRC 102507 / CH34) (Ralstonia metallidurans).